The primary structure comprises 132 residues: Small ribosomal subunit protein uS11 (132 aa).

The protein belongs to the universal ribosomal protein uS11 family. Part of the 30S ribosomal subunit.

Located on the platform of the 30S subunit. The chain is Small ribosomal subunit protein uS11 from Thermoplasma volcanium (strain ATCC 51530 / DSM 4299 / JCM 9571 / NBRC 15438 / GSS1).